The following is a 523-amino-acid chain: Ribonuclease Y (523 aa).

A helical membrane pass occupies residues 28 to 48 (TYYIVATIIIAVIAVYVDYYI). Residues 227–312 (TVYVVNLPND…EMVEKAKKEV (86 aa)) form the KH domain. The 94-residue stretch at 353 to 446 (VLKHSIEVSY…VQAADAISAA (94 aa)) folds into the HD domain.

This sequence belongs to the RNase Y family.

Its subcellular location is the cell membrane. In terms of biological role, endoribonuclease that initiates mRNA decay. This Clostridium tetani (strain Massachusetts / E88) protein is Ribonuclease Y.